A 701-amino-acid polypeptide reads, in one-letter code: Elongation factor G (701 aa).

Residues 8 to 290 (KRYRNIGICA…AVIEFLPAPD (283 aa)) form the tr-type G domain. Residues 17–24 (AHVDAGKT), 88–92 (DTPGH), and 142–145 (NKMD) contribute to the GTP site.

This sequence belongs to the TRAFAC class translation factor GTPase superfamily. Classic translation factor GTPase family. EF-G/EF-2 subfamily.

Its subcellular location is the cytoplasm. Its function is as follows. Catalyzes the GTP-dependent ribosomal translocation step during translation elongation. During this step, the ribosome changes from the pre-translocational (PRE) to the post-translocational (POST) state as the newly formed A-site-bound peptidyl-tRNA and P-site-bound deacylated tRNA move to the P and E sites, respectively. Catalyzes the coordinated movement of the two tRNA molecules, the mRNA and conformational changes in the ribosome. This chain is Elongation factor G, found in Marinobacter nauticus (strain ATCC 700491 / DSM 11845 / VT8) (Marinobacter aquaeolei).